Here is a 494-residue protein sequence, read N- to C-terminus: Serine/threonine-protein kinase PBL13 (494 aa).

Residue Cys-4 is the site of S-palmitoyl cysteine attachment. Thr-65 is modified (phosphothreonine). One can recognise a Protein kinase domain in the interval 76–356 (FSSSNFLGEG…STVVSVLQDI (281 aa)). ATP is bound by residues 82–90 (LGEGGFGPV) and Lys-111. Position 156 is a phosphotyrosine (Tyr-156). Asp-206 (proton acceptor) is an active-site residue. At Ser-210 the chain carries Phosphoserine. Position 240 is a phosphoserine; by autocatalysis (Ser-240). 2 positions are modified to phosphothreonine: Thr-241 and Thr-246. Tyr-254 carries the phosphotyrosine modification. Ser-321 bears the Phosphoserine; by autocatalysis mark. 2 positions are modified to phosphothreonine; by autocatalysis: Thr-323 and Thr-383. At Ser-384 the chain carries Phosphoserine; by autocatalysis. 6 positions are modified to phosphothreonine; by autocatalysis: Thr-395, Thr-398, Thr-406, Thr-413, Thr-421, and Thr-428. Ser-429 carries the phosphoserine; by autocatalysis modification. The segment at 434 to 471 (DKTRREVKETSLQNFDKPRNVSTTDNHQKFRSPAHTAR) is disordered. Thr-443 is subject to Phosphothreonine; by autocatalysis. Residues 443-458 (TSLQNFDKPRNVSTTD) are compositionally biased toward polar residues. 2 positions are modified to phosphoserine; by autocatalysis: Ser-444 and Ser-455. Thr-456 bears the Phosphothreonine; by autocatalysis mark. Residues 462–471 (KFRSPAHTAR) show a composition bias toward basic residues. A Phosphotyrosine; by autocatalysis modification is found at Tyr-481.

It belongs to the protein kinase superfamily. Ser/Thr protein kinase family. As to quaternary structure, interacts with RBHOD. Interaction is disrupted by flagellin-induced immune signaling.

Its subcellular location is the cell membrane. It carries out the reaction L-seryl-[protein] + ATP = O-phospho-L-seryl-[protein] + ADP + H(+). The catalysed reaction is L-threonyl-[protein] + ATP = O-phospho-L-threonyl-[protein] + ADP + H(+). Involved in defense responses. Acts as a negative regulator of plant immune responses. The protein is Serine/threonine-protein kinase PBL13 of Arabidopsis thaliana (Mouse-ear cress).